A 765-amino-acid polypeptide reads, in one-letter code: AMP deaminase 3 (765 aa).

A phosphoserine mark is found at S85 and S106. Zn(2+)-binding residues include H315 and H317. Substrate-binding positions include H317 and 386-391; that span reads KFNSKY. Residue H584 participates in Zn(2+) binding. E587 serves as a coordination point for substrate. H606 functions as the Proton acceptor in the catalytic mechanism. Residue D661 participates in Zn(2+) binding. Residue 662–665 participates in substrate binding; the sequence is DPMQ.

The protein belongs to the metallo-dependent hydrolases superfamily. Adenosine and AMP deaminases family. In terms of assembly, homotetramer. Requires Zn(2+) as cofactor. In terms of tissue distribution, expressed in adult tissues such as aorta, heart, kidney, lung, muscle and thyroid. Weakly expressed in thyroid and not detected in liver.

The catalysed reaction is AMP + H2O + H(+) = IMP + NH4(+). It participates in purine metabolism; IMP biosynthesis via salvage pathway; IMP from AMP: step 1/1. AMP deaminase plays a critical role in energy metabolism. The protein is AMP deaminase 3 of Rattus norvegicus (Rat).